Reading from the N-terminus, the 141-residue chain is Large ribosomal subunit protein uL11 (141 aa).

Belongs to the universal ribosomal protein uL11 family. In terms of assembly, part of the ribosomal stalk of the 50S ribosomal subunit. Interacts with L10 and the large rRNA to form the base of the stalk. L10 forms an elongated spine to which L12 dimers bind in a sequential fashion forming a multimeric L10(L12)X complex. Post-translationally, one or more lysine residues are methylated.

Its function is as follows. Forms part of the ribosomal stalk which helps the ribosome interact with GTP-bound translation factors. In Chlorobaculum tepidum (strain ATCC 49652 / DSM 12025 / NBRC 103806 / TLS) (Chlorobium tepidum), this protein is Large ribosomal subunit protein uL11.